Consider the following 118-residue polypeptide: Ribosome-binding factor A (118 aa).

This sequence belongs to the RbfA family. Monomer. Binds 30S ribosomal subunits, but not 50S ribosomal subunits or 70S ribosomes.

The protein localises to the cytoplasm. One of several proteins that assist in the late maturation steps of the functional core of the 30S ribosomal subunit. Associates with free 30S ribosomal subunits (but not with 30S subunits that are part of 70S ribosomes or polysomes). Required for efficient processing of 16S rRNA. May interact with the 5'-terminal helix region of 16S rRNA. This Dehalococcoides mccartyi (strain ATCC BAA-2266 / KCTC 15142 / 195) (Dehalococcoides ethenogenes (strain 195)) protein is Ribosome-binding factor A.